Here is a 210-residue protein sequence, read N- to C-terminus: Na(+)-translocating NADH-quinone reductase subunit D (210 aa).

6 helical membrane passes run proline 14–valine 34, leucine 42–isoleucine 62, isoleucine 72–alanine 92, valine 103–methionine 123, phenylalanine 131–valine 151, and asparagine 178–isoleucine 198.

This sequence belongs to the NqrDE/RnfAE family. In terms of assembly, composed of six subunits; NqrA, NqrB, NqrC, NqrD, NqrE and NqrF.

The protein resides in the cell inner membrane. The catalysed reaction is a ubiquinone + n Na(+)(in) + NADH + H(+) = a ubiquinol + n Na(+)(out) + NAD(+). NQR complex catalyzes the reduction of ubiquinone-1 to ubiquinol by two successive reactions, coupled with the transport of Na(+) ions from the cytoplasm to the periplasm. NqrA to NqrE are probably involved in the second step, the conversion of ubisemiquinone to ubiquinol. This chain is Na(+)-translocating NADH-quinone reductase subunit D, found in Shewanella putrefaciens (strain CN-32 / ATCC BAA-453).